We begin with the raw amino-acid sequence, 273 residues long: NADPH-dependent 7-cyano-7-deazaguanine reductase (273 aa).

81 to 83 contributes to the substrate binding site; it reads VES. 83-84 serves as a coordination point for NADPH; that stretch reads SK. The active-site Thioimide intermediate is Cys-179. The Proton donor role is filled by Asp-186. 218 to 219 contacts substrate; sequence AE. Position 247–248 (247–248) interacts with NADPH; it reads RG.

It belongs to the GTP cyclohydrolase I family. QueF type 2 subfamily. As to quaternary structure, homodimer.

The protein localises to the cytoplasm. It catalyses the reaction 7-aminomethyl-7-carbaguanine + 2 NADP(+) = 7-cyano-7-deazaguanine + 2 NADPH + 3 H(+). Its pathway is tRNA modification; tRNA-queuosine biosynthesis. Catalyzes the NADPH-dependent reduction of 7-cyano-7-deazaguanine (preQ0) to 7-aminomethyl-7-deazaguanine (preQ1). The protein is NADPH-dependent 7-cyano-7-deazaguanine reductase of Rickettsia canadensis (strain McKiel).